The sequence spans 55 residues: ATP synthase protein 8 (55 aa).

The helical transmembrane segment at 7-24 threads the bilayer; sequence NPWLFIMLMSWLTFSLII. Residues 35 to 55 are disordered; the sequence is NPPSNKTPTTTKTSPWTWPWT. The span at 37 to 55 shows a compositional bias: low complexity; the sequence is PSNKTPTTTKTSPWTWPWT.

The protein belongs to the ATPase protein 8 family. F-type ATPases have 2 components, CF(1) - the catalytic core - and CF(0) - the membrane proton channel.

Its subcellular location is the mitochondrion membrane. Its function is as follows. Mitochondrial membrane ATP synthase (F(1)F(0) ATP synthase or Complex V) produces ATP from ADP in the presence of a proton gradient across the membrane which is generated by electron transport complexes of the respiratory chain. F-type ATPases consist of two structural domains, F(1) - containing the extramembraneous catalytic core and F(0) - containing the membrane proton channel, linked together by a central stalk and a peripheral stalk. During catalysis, ATP synthesis in the catalytic domain of F(1) is coupled via a rotary mechanism of the central stalk subunits to proton translocation. Part of the complex F(0) domain. Minor subunit located with subunit a in the membrane. The chain is ATP synthase protein 8 (MT-ATP8) from Corythaeola cristata (Great blue turaco).